The chain runs to 436 residues: 4-hydroxyphenylpyruvate dioxygenase (436 aa).

2 VOC domains span residues 38 to 194 (RFHH…GFEV) and 210 to 370 (RLDH…IFTK). Fe cation is bound by residues His213, His295, and Glu381.

The protein belongs to the 4HPPD family. It depends on Fe cation as a cofactor.

The protein resides in the cytoplasm. The catalysed reaction is 3-(4-hydroxyphenyl)pyruvate + O2 = homogentisate + CO2. Its pathway is amino-acid degradation; L-phenylalanine degradation; acetoacetate and fumarate from L-phenylalanine: step 3/6. It functions in the pathway cofactor biosynthesis; prenylquinone biosynthesis. In Plectranthus scutellarioides (Coleus), this protein is 4-hydroxyphenylpyruvate dioxygenase.